We begin with the raw amino-acid sequence, 92 residues long: Bombyxin A-6 (92 aa).

The first 19 residues, 1–19 (MKILLAIALMLSTVMWVST), serve as a signal peptide directing secretion. Residue glutamine 20 is modified to Pyrrolidone carboxylic acid. 3 disulfides stabilise this stretch: cysteine 29–cysteine 79, cysteine 41–cysteine 92, and cysteine 78–cysteine 83. The propeptide at 50–70 (SGAQFASYGSAWLMPYSEGRG) is c peptide like.

It belongs to the insulin family. As to quaternary structure, heterodimer of a B chain and an A chain linked by two disulfide bonds.

It localises to the secreted. Its function is as follows. Brain peptide responsible for activation of prothoracic glands to produce ecdysone in insects. The polypeptide is Bombyxin A-6 (BBXA6) (Bombyx mori (Silk moth)).